Consider the following 266-residue polypeptide: Type III pantothenate kinase (266 aa).

ATP is bound at residue 11-18 (DIGNTSTV). Position 111 to 114 (111 to 114 (GADR)) interacts with substrate. The Proton acceptor role is filled by aspartate 113. K(+) is bound at residue aspartate 135. Threonine 138 is a binding site for ATP. Threonine 190 lines the substrate pocket.

Belongs to the type III pantothenate kinase family. Homodimer. The cofactor is NH4(+). It depends on K(+) as a cofactor.

It is found in the cytoplasm. The catalysed reaction is (R)-pantothenate + ATP = (R)-4'-phosphopantothenate + ADP + H(+). It functions in the pathway cofactor biosynthesis; coenzyme A biosynthesis; CoA from (R)-pantothenate: step 1/5. Catalyzes the phosphorylation of pantothenate (Pan), the first step in CoA biosynthesis. The polypeptide is Type III pantothenate kinase (Deinococcus geothermalis (strain DSM 11300 / CIP 105573 / AG-3a)).